A 391-amino-acid chain; its full sequence is Pyruvate dehydrogenase E1 component subunit alpha, testis-specific form, mitochondrial (391 aa).

Residues 1–30 constitute a mitochondrion transit peptide; it reads MRKMLATVLSQVFSGMVQKPALRGLLSSLK. His-93, Tyr-119, Arg-120, Ala-158, Gly-166, Val-168, Asp-197, Gly-198, Ala-199, Asn-226, and Tyr-228 together coordinate pyruvate. Thiamine diphosphate contacts are provided by Tyr-119 and Arg-120. Thiamine diphosphate-binding residues include Gly-166, Val-168, Asp-197, Gly-198, Ala-199, and Asn-226. Asp-197 serves as a coordination point for Mg(2+). Mg(2+)-binding residues include Asn-226 and Tyr-228. His-293 serves as a coordination point for thiamine diphosphate. 2 positions are modified to phosphoserine: Ser-294 and Ser-296. At Ser-301 the chain carries Phosphoserine; by PDK3.

Heterotetramer of two PDHA2 and two PDHB subunits. The heterotetramer interacts with DLAT, and is part of the multimeric pyruvate dehydrogenase complex that contains multiple copies of pyruvate dehydrogenase (E1), dihydrolipoamide acetyltransferase (DLAT, E2) and lipoamide dehydrogenase (DLD, E3). These subunits are bound to an inner core composed of about 48 DLAT and 12 PDHX molecules. Thiamine diphosphate serves as cofactor. The cofactor is Mg(2+). Testis.

The protein resides in the mitochondrion matrix. It carries out the reaction N(6)-[(R)-lipoyl]-L-lysyl-[protein] + pyruvate + H(+) = N(6)-[(R)-S(8)-acetyldihydrolipoyl]-L-lysyl-[protein] + CO2. Its activity is regulated as follows. Pyruvate dehydrogenase activity is inhibited by phosphorylation of PDHA2; it is reactivated by dephosphorylation. Functionally, the pyruvate dehydrogenase complex catalyzes the overall conversion of pyruvate to acetyl-CoA and CO(2), and thereby links the glycolytic pathway to the tricarboxylic cycle. The sequence is that of Pyruvate dehydrogenase E1 component subunit alpha, testis-specific form, mitochondrial (Pdha2) from Rattus norvegicus (Rat).